A 224-amino-acid chain; its full sequence is UPF0758 protein VIBHAR_00653 (224 aa).

Positions 102–224 (ALTSPEQTKL…SVSFAERGWI (123 aa)) constitute an MPN domain. His-173, His-175, and Asp-186 together coordinate Zn(2+). A JAMM motif motif is present at residues 173 to 186 (HNHPSGVAEPSQAD).

It belongs to the UPF0758 family.

The protein is UPF0758 protein VIBHAR_00653 of Vibrio campbellii (strain ATCC BAA-1116).